The chain runs to 374 residues: Mannitol-1-phosphate 5-dehydrogenase (374 aa).

3–14 (AIHFGAGNIGRG) contributes to the NAD(+) binding site.

The protein belongs to the mannitol dehydrogenase family.

It catalyses the reaction D-mannitol 1-phosphate + NAD(+) = beta-D-fructose 6-phosphate + NADH + H(+). The polypeptide is Mannitol-1-phosphate 5-dehydrogenase (Halalkalibacterium halodurans (strain ATCC BAA-125 / DSM 18197 / FERM 7344 / JCM 9153 / C-125) (Bacillus halodurans)).